We begin with the raw amino-acid sequence, 721 residues long: Putative cullin-like protein 1 (721 aa).

One can recognise a Cullin neddylation domain in the interval 651-713 (DRRYAIDAAL…RDYLERDTEN (63 aa)).

Belongs to the cullin family.

The polypeptide is Putative cullin-like protein 1 (Arabidopsis thaliana (Mouse-ear cress)).